The chain runs to 89 residues: Elongation factor 1-beta (89 aa).

The protein belongs to the EF-1-beta/EF-1-delta family.

Functionally, promotes the exchange of GDP for GTP in EF-1-alpha/GDP, thus allowing the regeneration of EF-1-alpha/GTP that could then be used to form the ternary complex EF-1-alpha/GTP/AAtRNA. The sequence is that of Elongation factor 1-beta from Methanococcus aeolicus (strain ATCC BAA-1280 / DSM 17508 / OCM 812 / Nankai-3).